The following is a 72-amino-acid chain: Conotoxin VnMKLT2-021 (72 aa).

An N-terminal signal peptide occupies residues 1–22 (MKLTCVLIVAVLFLTACQLTTA). The propeptide occupies 23–45 (ASYARSEREHPDLGSSDQNSKLT). Positions 25–44 (YARSEREHPDLGSSDQNSKL) are disordered. 3 disulfides stabilise this stretch: cysteine 48-cysteine 62, cysteine 55-cysteine 66, and cysteine 61-cysteine 71.

It belongs to the conotoxin O1 superfamily. Expressed by the venom duct.

The protein localises to the secreted. This Conus ventricosus (Mediterranean cone) protein is Conotoxin VnMKLT2-021.